The sequence spans 127 residues: UPF0251 protein Ccel_0627 (127 aa).

It belongs to the UPF0251 family.

The protein is UPF0251 protein Ccel_0627 of Ruminiclostridium cellulolyticum (strain ATCC 35319 / DSM 5812 / JCM 6584 / H10) (Clostridium cellulolyticum).